Here is a 339-residue protein sequence, read N- to C-terminus: Methionine import ATP-binding protein MetN 2 (339 aa).

Positions 2–241 (ISFNNVSKVY…PKTTTTQNFV (240 aa)) constitute an ABC transporter domain. 38 to 45 (GFSGAGKS) provides a ligand contact to ATP.

Belongs to the ABC transporter superfamily. Methionine importer (TC 3.A.1.24) family. In terms of assembly, the complex is composed of two ATP-binding proteins (MetN), two transmembrane proteins (MetI) and a solute-binding protein (MetQ).

The protein localises to the cell membrane. It carries out the reaction L-methionine(out) + ATP + H2O = L-methionine(in) + ADP + phosphate + H(+). It catalyses the reaction D-methionine(out) + ATP + H2O = D-methionine(in) + ADP + phosphate + H(+). Its function is as follows. Part of the ABC transporter complex MetNIQ involved in methionine import. Responsible for energy coupling to the transport system. The sequence is that of Methionine import ATP-binding protein MetN 2 from Bacillus anthracis.